The sequence spans 347 residues: Oocyte-specific homeobox protein 6 (347 aa).

2 disordered regions span residues 1 to 20 (MLQY…HSKF) and 54 to 86 (PRSP…IQMQ). The span at 72-85 (QESQGPSGKSSIQM) shows a compositional bias: polar residues. Positions 145 to 204 (HRKIRTVYTEEQKCVLKKHFHKCTYPSREQRMALAVLVGVTANEIQIWFKNHRAKSKRES) form a DNA-binding region, homeobox.

It belongs to the paired homeobox family. Obox subfamily. Specifically expressed in early embryos.

Its subcellular location is the nucleus. Its function is as follows. Transcription factor required for zygotic genome activation (ZGA), a critical event in early embryonic development during which the developmental control passes from maternally provided mRNAs to the expression of the zygotic genome after fertilization. This chain is Oocyte-specific homeobox protein 6, found in Mus musculus (Mouse).